The chain runs to 130 residues: Small ribosomal subunit protein uS9 (130 aa).

Belongs to the universal ribosomal protein uS9 family.

The sequence is that of Small ribosomal subunit protein uS9 from Photorhabdus laumondii subsp. laumondii (strain DSM 15139 / CIP 105565 / TT01) (Photorhabdus luminescens subsp. laumondii).